Consider the following 131-residue polypeptide: Small ribosomal subunit protein uS8 (131 aa).

This sequence belongs to the universal ribosomal protein uS8 family. In terms of assembly, part of the 30S ribosomal subunit. Contacts proteins S5 and S12.

In terms of biological role, one of the primary rRNA binding proteins, it binds directly to 16S rRNA central domain where it helps coordinate assembly of the platform of the 30S subunit. The polypeptide is Small ribosomal subunit protein uS8 (Polaromonas naphthalenivorans (strain CJ2)).